Here is a 1178-residue protein sequence, read N- to C-terminus: Phosphate system positive regulatory protein PHO81 (1178 aa).

An SPX domain is found at 1 to 169 (MKFGKYLEAR…QSHDKDFYLA (169 aa)). The interval 210–250 (QSSTFTNDDDDDNNTSNNNKHNNNNNNNNNNNNNNNNNNIL) is disordered. Residues 223–250 (NTSNNNKHNNNNNNNNNNNNNNNNNNIL) are compositionally biased toward low complexity. ANK repeat units lie at residues 423 to 452 (HSRV…LEDV), 458 to 487 (DSKT…ANAS), 506 to 535 (VQFD…KQNA), 556 to 586 (TGLC…DPNE), 591 to 620 (NKWT…RLDI), and 624 to 653 (NGHS…NLPS). A GP-PDE domain is found at 871-1178 (IINYEPYWKS…ELLFENNIDM (308 aa)). Ser956 is subject to Phosphoserine.

Associates specifically with the PHO80-PHO85 and PCL7-PHO85 cyclin-CDK complexes, and much of this interaction is mediated through the PHO80 and PCL7 cyclin subunits. Interacts with the transcription factor PHO4. In terms of processing, phosphorylated by the cyclin-CDK PHO80-PHO85. Phosphorylation mediates the formation of a stable interaction with the cyclin-CDK and is required for function as an active inhibitor of the complex under phosphate starvation conditions.

The protein localises to the cytoplasm. Its subcellular location is the nucleus. Functionally, inhibits the kinase activity of the cyclin-CDKs PHO80-PHO85 and PCL7-PHO85 under low-phosphate conditions. The sequence is that of Phosphate system positive regulatory protein PHO81 (PHO81) from Saccharomyces cerevisiae (strain ATCC 204508 / S288c) (Baker's yeast).